Here is a 465-residue protein sequence, read N- to C-terminus: Cysteine--tRNA ligase (465 aa).

C30 is a binding site for Zn(2+). The short motif at 32–42 (ITVYDYCHIGH) is the 'HIGH' region element. The Zn(2+) site is built by C214, H239, and E243. The 'KMSKS' region signature appears at 271–275 (KMSKS). An ATP-binding site is contributed by K274.

Belongs to the class-I aminoacyl-tRNA synthetase family. In terms of assembly, monomer. The cofactor is Zn(2+).

Its subcellular location is the cytoplasm. It catalyses the reaction tRNA(Cys) + L-cysteine + ATP = L-cysteinyl-tRNA(Cys) + AMP + diphosphate. The protein is Cysteine--tRNA ligase of Burkholderia mallei (strain NCTC 10229).